Reading from the N-terminus, the 125-residue chain is Multifunctional methyltransferase subunit TRM112-like protein (125 aa).

The TRM112 domain maps to 2-119; it reads KLLTHNLLSS…SRGIPNMLLN (118 aa).

The protein belongs to the TRM112 family. In terms of assembly, part of the heterodimeric BUD23-TRM112 methyltransferase complex; this heterodimerization is necessary for the metabolic stability and activity of the catalytic subunit BUD23. Part of the heterodimeric N6AMT1-TRM112 methyltransferase complex; this heterodimerization is necessary for S-adenosyl-L-methionine-binding to N6AMT1/HEMK2. Part of the heterodimeric ALKBH8-TRM112 methyltransferase complex. Part of the heterodimeric METTL5-TRM112 methyltransferase complex; this heterodimerization is necessary for the stability of the catalytic subunit METTL5. Part of the heterodimeric THUMPD3-TRM112 methyltransferase complex; this complex forms an active tRNA methyltransferase, where TRMT112 acts as an activator of the catalytic subunit THUMPD3. Part of the heterodimeric THUMPD2-TRM112 methyltransferase complex; this complex forms an active tRNA methyltransferase, where TRMT112 acts as an activator of the catalytic subunit THUMPD2. Part of the heterodimeric TRMT11-TRM112 methyltransferase complex; this complex forms an active tRNA methyltransferase, where TRMT112 acts as an activator of the catalytic subunit TRMT11. In terms of tissue distribution, abundantly expressed in the testis, also expressed in the brain, heart, kidney, liver, lung, muscle and spleen.

The protein localises to the nucleus. It localises to the nucleoplasm. It is found in the cytoplasm. Its subcellular location is the perinuclear region. In terms of biological role, acts as an activator of both rRNA/tRNA and protein methyltransferases. Together with methyltransferase BUD23, methylates the N(7) position of a guanine in 18S rRNA. The heterodimer with HEMK2/N6AMT1 catalyzes N5-methylation of ETF1 on 'Gln-185', using S-adenosyl L-methionine as methyl donor. The heterodimer with ALKBH8 catalyzes the methylation of 5-carboxymethyl uridine to 5-methylcarboxymethyl uridine at the wobble position of the anticodon loop in target tRNA species. Together with methyltransferase THUMPD3, catalyzes the formation of N(2)-methylguanosine at position 6 in a broad range of tRNA substrates and at position 7 of tRNA(Trp). Involved in the pre-rRNA processing steps leading to small-subunit rRNA production. Together with methyltransferase METTL5, specifically methylates the 6th position of adenine in position 1832 of 18S rRNA. The chain is Multifunctional methyltransferase subunit TRM112-like protein (Trmt112) from Mus musculus (Mouse).